We begin with the raw amino-acid sequence, 111 residues long: Parvalbumin alpha (111 aa).

Position 1 is an N-acetylthreonine; in form C2 (Thr-1). EF-hand domains follow at residues 40–75 (KPDD…FAAG) and 79–111 (LTAN…VKAA). Ca(2+) contacts are provided by Asp-53, Asp-55, Ser-57, Tyr-59, Glu-61, Glu-64, Asp-92, Asp-94, Asp-96, Lys-98, and Glu-103.

The protein belongs to the parvalbumin family. Acetylation of Thr-1 converts C1 to C2.

Functionally, in muscle, parvalbumin is thought to be involved in relaxation after contraction. It binds two calcium ions. This Latimeria chalumnae (Coelacanth) protein is Parvalbumin alpha.